The sequence spans 440 residues: Chromosomal replication initiator protein DnaA (440 aa).

The interval 1–69 is domain I, interacts with DnaA modulators; the sequence is MKERILQEIK…VKVVLGNDAT (69 aa). Residues 69–96 form a domain II region; that stretch reads TFEITYEAFEPHSSYSEPLVKKRAVLLT. A domain III, AAA+ region region spans residues 97–313; the sequence is PLNPDYTFEN…GAIIKLLVYK (217 aa). ADP contacts are provided by Val108, Asn113, Gly140, Leu141, Gly142, Lys143, Thr144, His145, and Arg300. Residue Gly140 coordinates ATP. Residues Gly142, Lys143, and Thr144 each contribute to the ATP site. Thr144 serves as a coordination point for Mg(2+). Residues 314–440 form a domain IV, binds dsDNA region; sequence ETTGKEVDLK…GEISRRALSG (127 aa).

This sequence belongs to the DnaA family. As to quaternary structure, oligomerizes as a right-handed, spiral filament on DNA at oriC.

It is found in the cytoplasm. Its function is as follows. Plays an essential role in the initiation and regulation of chromosomal replication. ATP-DnaA binds to the origin of replication (oriC) to initiate formation of the DNA replication initiation complex once per cell cycle. Binds the DnaA box (a 9 base pair repeat at the origin) and separates the double-stranded (ds)DNA. Forms a right-handed helical filament on oriC DNA; dsDNA binds to the exterior of the filament while single-stranded (ss)DNA is stabiized in the filament's interior. The ATP-DnaA-oriC complex binds and stabilizes one strand of the AT-rich DNA unwinding element (DUE), permitting loading of DNA polymerase. After initiation quickly degrades to an ADP-DnaA complex that is not apt for DNA replication. Binds acidic phospholipids. In terms of biological role, the DnaA box consensus is 5'-[ATC][AT]AC[CT]TACCA[CT][CTA]-3' in this bacterium. Mutagenesis of residues that line the central pore blocks dsDNA separation. The sequence is that of Chromosomal replication initiator protein DnaA from Thermotoga maritima (strain ATCC 43589 / DSM 3109 / JCM 10099 / NBRC 100826 / MSB8).